A 628-amino-acid polypeptide reads, in one-letter code: (+)-alpha pinene synthase 1, chloroplastic (628 aa).

Residues Met-1 to Thr-18 constitute a chloroplast transit peptide. Positions 379, 383, and 531 each coordinate Mg(2+). The DDXXD motif signature appears at Asp-379 to Asp-383.

It belongs to the terpene synthase family. Tpsd subfamily. Mg(2+) is required as a cofactor. Mn(2+) serves as cofactor.

It is found in the plastid. The protein resides in the chloroplast. The catalysed reaction is (2E)-geranyl diphosphate = (1R,5R)-alpha-pinene + diphosphate. Its pathway is terpene metabolism; oleoresin biosynthesis. The protein operates within secondary metabolite biosynthesis; terpenoid biosynthesis. Monoterpene synthase (TPS) involved in the biosynthesis of monoterpene natural products included in conifer oleoresin secretions and volatile emissions; these compounds contribute to biotic and abiotic stress defense against herbivores and pathogens. Catalyzes the conversion of (2E)-geranyl diphosphate (GPP) to (+)-alpha-pinene. The polypeptide is (+)-alpha pinene synthase 1, chloroplastic (Pinus banksiana (Jack pine)).